The following is a 403-amino-acid chain: DNA polymerase IV (403 aa).

The 181-residue stretch at 23-203 (IAHMDCDAFY…KPVNILPGVG (181 aa)) folds into the UmuC domain. Mg(2+)-binding residues include D27 and D120. Residue E121 is part of the active site.

The protein belongs to the DNA polymerase type-Y family. In terms of assembly, monomer. Mg(2+) serves as cofactor.

It is found in the cytoplasm. It carries out the reaction DNA(n) + a 2'-deoxyribonucleoside 5'-triphosphate = DNA(n+1) + diphosphate. Its function is as follows. Poorly processive, error-prone DNA polymerase involved in untargeted mutagenesis. Copies undamaged DNA at stalled replication forks, which arise in vivo from mismatched or misaligned primer ends. These misaligned primers can be extended by PolIV. Exhibits no 3'-5' exonuclease (proofreading) activity. May be involved in translesional synthesis, in conjunction with the beta clamp from PolIII. This is DNA polymerase IV from Caulobacter vibrioides (strain ATCC 19089 / CIP 103742 / CB 15) (Caulobacter crescentus).